A 243-amino-acid chain; its full sequence is UPF0246 protein SpyM51747 (243 aa).

Belongs to the UPF0246 family.

The sequence is that of UPF0246 protein SpyM51747 from Streptococcus pyogenes serotype M5 (strain Manfredo).